A 330-amino-acid polypeptide reads, in one-letter code: Delta-aminolevulinic acid dehydratase (330 aa).

Cysteine 122, cysteine 124, histidine 131, and cysteine 132 together coordinate Zn(2+). The active-site Schiff-base intermediate with substrate is lysine 199. An N6-succinyllysine modification is found at lysine 199. Arginine 209 contacts 5-aminolevulinate. Phosphoserine is present on serine 215. Arginine 221 contributes to the 5-aminolevulinate binding site. Cysteine 223 contacts Zn(2+). Lysine 252 serves as the catalytic Schiff-base intermediate with substrate. An N6-succinyllysine modification is found at lysine 252. Serine 279 is a 5-aminolevulinate binding site.

Belongs to the ALAD family. Homooctamer; active form. Homohexamer; low activity form. It depends on Zn(2+) as a cofactor.

Its subcellular location is the cytoplasm. It is found in the cytosol. The enzyme catalyses 2 5-aminolevulinate = porphobilinogen + 2 H2O + H(+). The protein operates within porphyrin-containing compound metabolism; protoporphyrin-IX biosynthesis; coproporphyrinogen-III from 5-aminolevulinate: step 1/4. Its activity is regulated as follows. Can alternate between a fully active homooctamer and a low-activity homohexamer. A bound magnesium ion may promote the assembly of the fully active homooctamer. The magnesium-binding site is absent in the low-activity homohexamer. Inhibited by compounds that favor the hexameric state. Inhibited by divalent lead ions. The lead ions partially displace the zinc cofactor. In terms of biological role, catalyzes an early step in the biosynthesis of tetrapyrroles. Binds two molecules of 5-aminolevulinate per subunit, each at a distinct site, and catalyzes their condensation to form porphobilinogen. The chain is Delta-aminolevulinic acid dehydratase (ALAD) from Pongo abelii (Sumatran orangutan).